The following is a 400-amino-acid chain: Subtilisin-like protease 7 (400 aa).

A signal peptide spans 1–20; that stretch reads MGFITKAIPLALAAASVING. Residues 21–119 constitute a propeptide that is removed on maturation; that stretch reads AEILETRAGV…IERDARVQIN (99 aa). The 83-residue stretch at 36-118 folds into the Inhibitor I9 domain; it reads KYIVVMNDGI…YIERDARVQI (83 aa). Positions 129–400 constitute a Peptidase S8 domain; it reads SWGLARVGSK…SKLINNGSGM (272 aa). Catalysis depends on charge relay system residues aspartate 161 and histidine 192. An N-linked (GlcNAc...) asparagine glycan is attached at asparagine 252. The active-site Charge relay system is the serine 346. Asparagine 396 carries N-linked (GlcNAc...) asparagine glycosylation.

Belongs to the peptidase S8 family.

Its subcellular location is the secreted. Functionally, secreted subtilisin-like serine protease with keratinolytic activity that contributes to pathogenicity. This Trichophyton violaceum protein is Subtilisin-like protease 7 (SUB7).